Reading from the N-terminus, the 399-residue chain is Glutathione-independent formaldehyde dehydrogenase (399 aa).

Cys-47 is a Zn(2+) binding site. Residues Gly-48, Ser-49, and His-52 each contribute to the NAD(+) site. Residues His-68, Cys-98, Cys-101, Cys-104, Cys-112, and Asp-170 each coordinate Zn(2+). NAD(+)-binding residues include Val-198, Asp-218, Arg-223, Val-263, Arg-268, His-270, Pro-300, Leu-302, Gly-337, and Thr-339.

The protein belongs to the zinc-containing alcohol dehydrogenase family. As to quaternary structure, homotetramer. Zn(2+) is required as a cofactor.

It catalyses the reaction formaldehyde + NAD(+) + H2O = formate + NADH + 2 H(+). It carries out the reaction acetaldehyde + NAD(+) + H2O = acetate + NADH + 2 H(+). The catalysed reaction is 2 formaldehyde + H2O = methanol + formate + H(+). Its activity is regulated as follows. Inactivated by bipyridine and p-chloromercuribenzoate. Its function is as follows. Dehydrogenase that catalyzes the NAD(+)-dependent oxidation of formaldehyde and acetaldehyde, and, to a lesser extent, long-chain alcohols, but is inactive against propionaldehyde, butyraldehyde, methanol and ethanol. Can also catalyze the dismutation of a wide range of aldehydes such as formaldehyde. In Pseudomonas putida (Arthrobacter siderocapsulatus), this protein is Glutathione-independent formaldehyde dehydrogenase.